The sequence spans 353 residues: Forkhead box protein I3-A (353 aa).

A DNA-binding region (fork-head) is located at residues 116–210 (RPPYSYSALI…DNGNFRRKRK (95 aa)). The segment at 201–255 (DNGNFRRKRKRKSDSLAEEEGKGYSGSDSALSSPKNPSDSSERGNSPISTDQAPC) is disordered. Positions 206-212 (RRKRKRK) match the Nuclear localization signal motif. Over residues 213-222 (SDSLAEEEGK) the composition is skewed to basic and acidic residues. The segment covering 226–252 (GSDSALSSPKNPSDSSERGNSPISTDQ) has biased composition (polar residues).

In terms of tissue distribution, expressed in ionocyte precursors.

It is found in the nucleus. In terms of biological role, transcription factor required for epithelial cell differentiation. Involved in specification of skin ionocytes from epidermal precursors. This is Forkhead box protein I3-A from Danio rerio (Zebrafish).